The sequence spans 1175 residues: Solute carrier family 9 member C1 (1175 aa).

At 1–39 (MEMEEISENLTASHSIKLTNMWLELLKSVFLSTPQDLPE) the chain is on the extracellular side. A helical membrane pass occupies residues 40-59 (IILILSLICTVGAFLNMHLK). Residues 60-64 (DFPIP) lie on the Cytoplasmic side of the membrane. The helical transmembrane segment at 65–82 (LPVILFLIGCCFEILSFA) threads the bilayer. Topologically, residues 83 to 98 (STQIQIYADAIQWMDP) are extracellular. A helical transmembrane segment spans residues 99 to 115 (DIFFGIFTPVIIFNVAF). Topologically, residues 116 to 125 (DMDIYMLQKL) are cytoplasmic. Residues 126-151 (FWQILVITIPGFLINYTLILWYLQSV) traverse the membrane as a helical segment. The tract at residues 126-213 (FWQILVITIP…SLVIYSGVVH (88 aa)) is transport core domain. Residues 152–157 (NKLSLK) lie on the Extracellular side of the membrane. A helical membrane pass occupies residues 158–183 (TVPWLLFSAVLISSDPMLTSASIRDL). Residues 184–186 (GLS) are Cytoplasmic-facing. The chain crosses the membrane as a helical span at residues 187-212 (RSLTNLINGESLLTSVLSLVIYSGVV). Residues 213 to 225 (HIRFKSKSVNHTL) lie on the Extracellular side of the membrane. The helical transmembrane segment at 226-257 (AHKVMSTAWSYIVESFITGIVFTKVIQLWMAT) threads the bilayer. Residues 258–261 (IFGD) lie on the Cytoplasmic side of the membrane. The chain crosses the membrane as a helical span at residues 262 to 283 (DVNHITLIFSVLYLIFYVCELV). At 284–286 (GMS) the chain is on the extracellular side. A helical membrane pass occupies residues 287-300 (GIFTLATIGLFLNS). The Cytoplasmic portion of the chain corresponds to 301–307 (TSFKPGV). A helical transmembrane segment spans residues 308 to 339 (EAFLLEFWNCLSFIGFLMVFTFIGLLIPAHTY). The Extracellular portion of the chain corresponds to 340–344 (LHISF). A helical transmembrane segment spans residues 345–374 (SDVYYSLNIYFTLIVLRLLVFLLMSPILSR). The tract at residues 345–446 (SDVYYSLNIY…FILPMAVTKL (102 aa)) is transport core domain. Residues 375–380 (LGHGFS) lie on the Cytoplasmic side of the membrane. The chain crosses the membrane as a helical span at residues 381-411 (WRWAFIMVWSEMKGTPNINMALLLAYSDISL). Residues 412–415 (GSER) lie on the Extracellular side of the membrane. The chain crosses the membrane as a helical span at residues 416–446 (ERSQILFHGVSVCVITLIVNRFILPMAVTKL). At 447–632 (GLRDVTSTKY…ACHRIVFTNE (186 aa)) the chain is on the cytoplasmic side. An ion transport-like region spans residues 618–698 (YMFLHACHRI…EFFSHTWLLF (81 aa)). The chain crosses the membrane as a helical span at residues 633–653 (FEYTGYLVVLMSTYPMIICWI). At 654-657 (SRLK) the chain is on the extracellular side. Residues 658 to 684 (DIYDNEIKCANYYFLAFYILEALLKVA) traverse the membrane as a helical segment. Residues 685-691 (AMRKEFF) lie on the Cytoplasmic side of the membrane. The chain crosses the membrane as a helical span at residues 692–716 (SHTWLLFELGITLVGVLDIILIETD). Over 717–724 (SISYNFDL) the chain is Extracellular. The helical transmembrane segment at 725-751 (TETVVFMNVIRLLRILRILKLVTPKLL) threads the bilayer. The Cytoplasmic portion of the chain corresponds to 752–1175 (QIIDKRMSQQ…EELIEENINI (424 aa)). Positions 1137 to 1146 (MKPDSERESF) are enriched in basic and acidic residues. Residues 1137–1175 (MKPDSERESFETLDETSEEDNGKKENQENEELIEENINI) form a disordered region. The segment covering 1164–1175 (ENEELIEENINI) has biased composition (acidic residues).

This sequence belongs to the monovalent cation:proton antiporter 1 (CPA1) transporter (TC 2.A.36) family. In terms of assembly, interacts with soluble adenylyl cyclase (sAC). As to expression, testis-specific. Specifically present in the principal piece of sperm tail (at protein level).

The protein localises to the cell projection. It localises to the cilium. The protein resides in the flagellum membrane. Its function is as follows. Sperm-specific solute carrier involved in intracellular pH regulation of spermatozoa. Required for sperm motility and fertility. Involved in sperm cell hyperactivation, a step needed for sperm motility which is essential late in the preparation of sperm for fertilization. Required for the expression and bicarbonate regulation of the soluble adenylyl cyclase (sAC). This Mus musculus (Mouse) protein is Solute carrier family 9 member C1 (Slc9c1).